The chain runs to 136 residues: MFDIGFWELVLISVIGLVVLGPERLPHAIRSVMHWITTAKNMANSVKTEVTQELKLHEINENMIKASKQGLSDLDPELQKSIDEMKETAEQLSRPYKKDIDDIKTSLDKNPSGTTQQENSILDSSKTTPPRQDKNE.

The helical transmembrane segment at 1–21 (MFDIGFWELVLISVIGLVVLG) threads the bilayer. Residues 66–136 (ASKQGLSDLD…TTPPRQDKNE (71 aa)) are disordered. Composition is skewed to basic and acidic residues over residues 77–89 (ELQKSIDEMKETA) and 96–107 (YKKDIDDIKTSL). Polar residues predominate over residues 108-130 (DKNPSGTTQQENSILDSSKTTPP).

It belongs to the TatB family. The Tat system comprises two distinct complexes: a TatABC complex, containing multiple copies of TatA, TatB and TatC subunits, and a separate TatA complex, containing only TatA subunits. Substrates initially bind to the TatABC complex, which probably triggers association of the separate TatA complex to form the active translocon.

Its subcellular location is the cell inner membrane. Part of the twin-arginine translocation (Tat) system that transports large folded proteins containing a characteristic twin-arginine motif in their signal peptide across membranes. Together with TatC, TatB is part of a receptor directly interacting with Tat signal peptides. TatB may form an oligomeric binding site that transiently accommodates folded Tat precursor proteins before their translocation. The sequence is that of Sec-independent protein translocase protein TatB from Psychromonas ingrahamii (strain DSM 17664 / CCUG 51855 / 37).